Here is a 429-residue protein sequence, read N- to C-terminus: Serine hydroxymethyltransferase (429 aa).

(6S)-5,6,7,8-tetrahydrofolate is bound by residues Leu130 and 134 to 136; that span reads GHL. An N6-(pyridoxal phosphate)lysine modification is found at Lys239.

The protein belongs to the SHMT family. In terms of assembly, homodimer. Requires pyridoxal 5'-phosphate as cofactor.

It is found in the cytoplasm. The catalysed reaction is (6R)-5,10-methylene-5,6,7,8-tetrahydrofolate + glycine + H2O = (6S)-5,6,7,8-tetrahydrofolate + L-serine. It functions in the pathway one-carbon metabolism; tetrahydrofolate interconversion. Its pathway is amino-acid biosynthesis; glycine biosynthesis; glycine from L-serine: step 1/1. Its function is as follows. Catalyzes the reversible interconversion of serine and glycine with tetrahydrofolate (THF) serving as the one-carbon carrier. This reaction serves as the major source of one-carbon groups required for the biosynthesis of purines, thymidylate, methionine, and other important biomolecules. Also exhibits THF-independent aldolase activity toward beta-hydroxyamino acids, producing glycine and aldehydes, via a retro-aldol mechanism. This is Serine hydroxymethyltransferase from Phenylobacterium zucineum (strain HLK1).